A 127-amino-acid chain; its full sequence is Aspartate 1-decarboxylase (127 aa).

Ser25 serves as the catalytic Schiff-base intermediate with substrate; via pyruvic acid. The residue at position 25 (Ser25) is a Pyruvic acid (Ser). Thr57 serves as a coordination point for substrate. Residue Tyr58 is the Proton donor of the active site. 73–75 (GAA) contributes to the substrate binding site.

Belongs to the PanD family. As to quaternary structure, heterooctamer of four alpha and four beta subunits. Pyruvate serves as cofactor. Post-translationally, is synthesized initially as an inactive proenzyme, which is activated by self-cleavage at a specific serine bond to produce a beta-subunit with a hydroxyl group at its C-terminus and an alpha-subunit with a pyruvoyl group at its N-terminus.

It localises to the cytoplasm. The catalysed reaction is L-aspartate + H(+) = beta-alanine + CO2. The protein operates within cofactor biosynthesis; (R)-pantothenate biosynthesis; beta-alanine from L-aspartate: step 1/1. In terms of biological role, catalyzes the pyruvoyl-dependent decarboxylation of aspartate to produce beta-alanine. The sequence is that of Aspartate 1-decarboxylase from Bacillus cereus (strain B4264).